A 232-amino-acid polypeptide reads, in one-letter code: Lipoprotein-releasing system ATP-binding protein LolD (232 aa).

In terms of domain architecture, ABC transporter spans I6 to V231. ATP is bound at residue G42–S49.

This sequence belongs to the ABC transporter superfamily. Lipoprotein translocase (TC 3.A.1.125) family. In terms of assembly, the complex is composed of two ATP-binding proteins (LolD) and two transmembrane proteins (LolC and LolE).

It is found in the cell inner membrane. Its function is as follows. Part of the ABC transporter complex LolCDE involved in the translocation of mature outer membrane-directed lipoproteins, from the inner membrane to the periplasmic chaperone, LolA. Responsible for the formation of the LolA-lipoprotein complex in an ATP-dependent manner. The sequence is that of Lipoprotein-releasing system ATP-binding protein LolD from Pseudoalteromonas translucida (strain TAC 125).